A 298-amino-acid chain; its full sequence is MITVRVPATSANMGPGFDTLGIALNLYNDFGFREIEDGLKFNGMPEEFCNEDNIIYKAMKYCFDKAGYKIKGLEISEIKQDVPVSRGLGSSSTCIVGGLVGANEILGKKFSEEELLEMAVEIEGHPDNVAPALLGGMVVAIFDENKTYYDKIDVKNGIKFISIIPNFRLSTEEARKVLPKEISLKDGVYNVSRAALMVACFSSGKYELLRYACKDAFHQNYRSKLIPGFEEVYNKSYELGALACYLSGAGPTIMAIIDEKDERFSNKLKEFLQIKGLEWNILGLSLDNAGATIIEGTK.

83–93 (PVSRGLGSSST) is a binding site for ATP.

The protein belongs to the GHMP kinase family. Homoserine kinase subfamily.

The protein localises to the cytoplasm. It catalyses the reaction L-homoserine + ATP = O-phospho-L-homoserine + ADP + H(+). Its pathway is amino-acid biosynthesis; L-threonine biosynthesis; L-threonine from L-aspartate: step 4/5. In terms of biological role, catalyzes the ATP-dependent phosphorylation of L-homoserine to L-homoserine phosphate. The chain is Homoserine kinase from Clostridium beijerinckii (strain ATCC 51743 / NCIMB 8052) (Clostridium acetobutylicum).